We begin with the raw amino-acid sequence, 262 residues long: Demethyldecarbamoylnovobiocin O-methyltransferase (262 aa).

An S-adenosyl-L-methionine-binding site is contributed by 64-65; it reads TM. The active-site Proton acceptor is Glu-72. S-adenosyl-L-methionine-binding positions include 92–96, 122–126, Phe-178, 196–197, and Ser-202; these read ETGVW, DSFQG, and DG. Asp-196 provides a ligand contact to Mg(2+). Positions 223 and 224 each coordinate Mg(2+).

This sequence belongs to the methyltransferase TylF/MycF family. As to quaternary structure, homodimer. It depends on Mg(2+) as a cofactor.

It carries out the reaction desmethyldescarbamoylnovobiocin + S-adenosyl-L-methionine = descarbamoylnovobiocin + S-adenosyl-L-homocysteine + H(+). Its pathway is antibiotic biosynthesis; novobiocin biosynthesis. S-adenosyl-L-methionine-dependent O-methyltransferase that methylates at 4-OH of the noviose moiety, the penultimate step in the novobiocin biosynthesis pathway. Novobiocin is an aminocoumarin family antibiotic that targets bacterial DNA gyrases. This Streptomyces niveus (Streptomyces spheroides) protein is Demethyldecarbamoylnovobiocin O-methyltransferase (novP).